The following is a 141-amino-acid chain: Hemoglobin subunit alpha-A (141 aa).

A Globin domain is found at 1-141; it reads VLSGSDKTNV…VGNVLTAKYR (141 aa). Histidine 58 serves as a coordination point for O2. Histidine 87 provides a ligand contact to heme b.

Belongs to the globin family. As to quaternary structure, heterotetramer of two alpha chains and two beta chains. In terms of tissue distribution, red blood cells.

Functionally, involved in oxygen transport from the lung to the various peripheral tissues. The protein is Hemoglobin subunit alpha-A (HBAA) of Vultur gryphus (Andean condor).